The sequence spans 354 residues: Kelch domain-containing protein 8B (354 aa).

Kelch repeat units lie at residues 1–31 (MSAG…HQDG), 32–79 (HLLV…VLGK), 81–127 (VLVV…ERDG), 128–175 (MVYA…LHGN), 176–222 (KIYV…MAEG), 224–281 (VFSL…SLGG), 282–329 (HIVA…QAGP), and 331–354 (LFVI…RDGV).

It localises to the cytoplasm. It is found in the midbody. Functionally, involved in pinching off the separated nuclei at the cleavage furrow and in cytokinesis. Required for mitotic integrity and maintenance of chromosomal stability. Protects cells against mitotic errors, centrosomal amplification, micronucleus formation and aneuploidy. Plays a key role of midbody function involving abscission of the daughter cells during cytokinesis and appropriate chromosomal and nuclear segregation into the daughter cells. This is Kelch domain-containing protein 8B from Homo sapiens (Human).